A 293-amino-acid polypeptide reads, in one-letter code: Short-chain dehydrogenase/reductase PhomF (293 aa).

Positions 31 and 102 each coordinate NADP(+). The active-site Proton donor is the S175. Residues Y190, K194, and S225 each coordinate NADP(+). Catalysis depends on Y190, which acts as the Proton acceptor. K194 (lowers pKa of active site Tyr) is an active-site residue.

The protein belongs to the short-chain dehydrogenases/reductases (SDR) family.

Short-chain dehydrogenase/reductase; part of the gene cluster that mediates the biosynthesis of the phomopsins, a group of hexapeptide mycotoxins which infects lupins and causes lupinosis disease in livestock. The role of phomF within the phomopsins biosynthesis pathway has still to be determined. The pathway starts with the processing of the precursor phomA by several endopeptidases including kexin proteases as well as the cluster-specific S41 family peptidase phomP1 and the oligopeptidase phomG to produce 10 identical copies of the hexapeptide Tyr-Val-Ile-Pro-Ile-Asp. After being excised from the precursor peptide, the core peptides are cyclized and modified post-translationally by enzymes encoded within the gene cluster. The timing and order of proteolysis of the phomA precursor and PTMs are still unknown. Two tyrosinase-like enzymes, phomQ1 and phomQ2, catalyze the chlorination and hydroxylation of Tyr, respectively. PhomYb, is proposed to be involved in the construction of the macrocyclic structure. The other 4 ustYa family proteins may be involved in PTMs that generate the unique structure of phomopsin A. PhomYa is required for the hydroxylation of C-beta of Tyr. PhomYc, phomYd, and phomYe are responsible for the biosynthesis of 2,3-dehydroisoleucine (dIle), 2,3-dehydroaspartic acid (dAsp), and 3,4-dehydroproline (dPro), respectively. While dIle formation by phomYc is indispensable for the installation of dAsp by phomYd, the order of the other PTMs have not been elucidated yet. Most of the biosynthetic enzymes likely have broad substrate specificity, and thus, there might be a metabolic grid from a precursor to phomopsin A. The enzyme(s) responsible for the biosynthesis of 3,4-dehydrovaline (dVal) have also not been identified yet. Finally, phomM acts as an S-adenosylmethionine-dependent alpha-N-methyltransferase that catalyzes two successive N-methylation reactions, converting N-desmethyl-phomopsin A to phomopsin A and phomopsin A further to an N,N-dimethylated congener called phomopsin E. This Diaporthe leptostromiformis (Lupinosis disease fungus) protein is Short-chain dehydrogenase/reductase PhomF.